The sequence spans 436 residues: Trigger factor (436 aa).

A PPIase FKBP-type domain is found at 162 to 247; sequence GDRVIIDFEG…LNNVSEPTLP (86 aa).

The protein belongs to the FKBP-type PPIase family. Tig subfamily.

The protein resides in the cytoplasm. The catalysed reaction is [protein]-peptidylproline (omega=180) = [protein]-peptidylproline (omega=0). In terms of biological role, involved in protein export. Acts as a chaperone by maintaining the newly synthesized protein in an open conformation. Functions as a peptidyl-prolyl cis-trans isomerase. The chain is Trigger factor from Neisseria gonorrhoeae (strain ATCC 700825 / FA 1090).